The primary structure comprises 67 residues: uncharacterized protein (67 aa).

This is an uncharacterized protein from Bacillus subtilis (strain 168).